The primary structure comprises 334 residues: Ornithine carbamoyltransferase, catabolic (334 aa).

Carbamoyl phosphate contacts are provided by residues 57–60, Gln84, Arg108, and 135–138; these read STRT and HPTQ. L-ornithine contacts are provided by residues Asn169, Asp233, and 237–238; that span reads SM. Carbamoyl phosphate is bound by residues 275 to 276 and Arg320; that span reads CL.

This sequence belongs to the aspartate/ornithine carbamoyltransferase superfamily. OTCase family.

It localises to the cytoplasm. It carries out the reaction carbamoyl phosphate + L-ornithine = L-citrulline + phosphate + H(+). It functions in the pathway amino-acid degradation; L-arginine degradation via ADI pathway; carbamoyl phosphate from L-arginine: step 2/2. Functionally, reversibly catalyzes the transfer of the carbamoyl group from carbamoyl phosphate (CP) to the N(epsilon) atom of ornithine (ORN) to produce L-citrulline. In Salmonella typhimurium (strain LT2 / SGSC1412 / ATCC 700720), this protein is Ornithine carbamoyltransferase, catabolic (arcB).